The following is a 441-amino-acid chain: Mannose-6-phosphate isomerase (441 aa).

The Zn(2+) site is built by Gln-111, His-113, Glu-138, and His-285. Arg-304 is an active-site residue.

It belongs to the mannose-6-phosphate isomerase type 1 family. As to quaternary structure, monomer. It depends on Zn(2+) as a cofactor.

Its subcellular location is the cytoplasm. It catalyses the reaction D-mannose 6-phosphate = D-fructose 6-phosphate. It functions in the pathway nucleotide-sugar biosynthesis; GDP-alpha-D-mannose biosynthesis; alpha-D-mannose 1-phosphate from D-fructose 6-phosphate: step 1/2. In terms of biological role, involved in the synthesis of the GDP-mannose and dolichol-phosphate-mannose required for a number of critical mannosyl transfer reactions. In Candida albicans (strain SC5314 / ATCC MYA-2876) (Yeast), this protein is Mannose-6-phosphate isomerase (PMI1).